A 221-amino-acid polypeptide reads, in one-letter code: Ktr system potassium uptake protein C (221 aa).

One can recognise an RCK N-terminal domain in the interval 2 to 118 (KKEFAVIGLG…LSKIGADHIV (117 aa)). Residues Arg12, 32–34 (DID), 52–53 (DS), 74–76 (IGE), 99–101 (KAQ), His105, and Glu121 contribute to the NAD(+) site. The 85-residue stretch at 135-219 (NNVLDYLELS…ISRFEKRVLH (85 aa)) folds into the RCK C-terminal domain.

Belongs to the KtrA potassium transport family. In terms of assembly, homodimer, tetramer (dimer of homodimer) and octamer (tetramer of homodimer). Part of the KtrCD complex formed by an octameric catalytic ring of KtrC and a membrane associated dimer of KtrD forming a potassium channel.

Its subcellular location is the cell membrane. Catalytic subunit of the KtrCD potassium uptake transporter. The 2 major potassium transporter complexes KtrAB and KtrCD confer resistance to both suddenly imposed and prolonged osmotic stress. This is Ktr system potassium uptake protein C (ktrC) from Bacillus subtilis (strain 168).